Consider the following 626-residue polypeptide: 4-hydroxy-3-methylbut-2-en-1-yl diphosphate synthase (flavodoxin) (626 aa).

Residues Cys-521, Cys-524, Cys-555, and Glu-562 each contribute to the [4Fe-4S] cluster site.

It belongs to the IspG family. The cofactor is [4Fe-4S] cluster.

It carries out the reaction (2E)-4-hydroxy-3-methylbut-2-enyl diphosphate + oxidized [flavodoxin] + H2O + 2 H(+) = 2-C-methyl-D-erythritol 2,4-cyclic diphosphate + reduced [flavodoxin]. It functions in the pathway isoprenoid biosynthesis; isopentenyl diphosphate biosynthesis via DXP pathway; isopentenyl diphosphate from 1-deoxy-D-xylulose 5-phosphate: step 5/6. Its function is as follows. Converts 2C-methyl-D-erythritol 2,4-cyclodiphosphate (ME-2,4cPP) into 1-hydroxy-2-methyl-2-(E)-butenyl 4-diphosphate. This chain is 4-hydroxy-3-methylbut-2-en-1-yl diphosphate synthase (flavodoxin), found in Bacteroides fragilis (strain ATCC 25285 / DSM 2151 / CCUG 4856 / JCM 11019 / LMG 10263 / NCTC 9343 / Onslow / VPI 2553 / EN-2).